The primary structure comprises 263 residues: Elongation factor Ts (263 aa).

The tract at residues 82–85 (TDFV) is involved in Mg(2+) ion dislocation from EF-Tu. A compositionally biased stretch (low complexity) spans 221–251 (APPAVVEAPVAETPEPAVAETPEAKPAATES). Residues 221–263 (APPAVVEAPVAETPEPAVAETPEAKPAATESKPAKSKSAKKKK) are disordered. The segment covering 254–263 (AKSKSAKKKK) has biased composition (basic residues).

The protein belongs to the EF-Ts family.

The protein localises to the cytoplasm. Functionally, associates with the EF-Tu.GDP complex and induces the exchange of GDP to GTP. It remains bound to the aminoacyl-tRNA.EF-Tu.GTP complex up to the GTP hydrolysis stage on the ribosome. The sequence is that of Elongation factor Ts from Cyanothece sp. (strain PCC 7425 / ATCC 29141).